The sequence spans 835 residues: Protein translocase subunit SecA 1 (835 aa).

ATP-binding positions include Q85, 103 to 107 (GEGKT), and D492. The disordered stretch occupies residues 788–807 (VQGEAVHPSSDGEEAKKKPV). The Zn(2+) site is built by C819, C821, C830, and C831.

The protein belongs to the SecA family. In terms of assembly, monomer and homodimer. Part of the essential Sec protein translocation apparatus which comprises SecA, SecYEG and auxiliary proteins SecDF. Other proteins may also be involved. The cofactor is Zn(2+).

The protein localises to the cell membrane. It is found in the cytoplasm. It carries out the reaction ATP + H2O + cellular proteinSide 1 = ADP + phosphate + cellular proteinSide 2.. Functionally, part of the Sec protein translocase complex. Interacts with the SecYEG preprotein conducting channel. Has a central role in coupling the hydrolysis of ATP to the transfer of proteins into and across the cell membrane, serving as an ATP-driven molecular motor driving the stepwise translocation of polypeptide chains across the membrane. In Bacillus thuringiensis (strain Al Hakam), this protein is Protein translocase subunit SecA 1.